A 93-amino-acid polypeptide reads, in one-letter code: uncharacterized protein (93 aa).

This is an uncharacterized protein from Rickettsia conorii (strain ATCC VR-613 / Malish 7).